A 271-amino-acid polypeptide reads, in one-letter code: Glutamate racemase (271 aa).

Substrate contacts are provided by residues 9 to 10 and 41 to 42; these read DS and YG. Cysteine 72 (proton donor/acceptor) is an active-site residue. 73 to 74 is a binding site for substrate; it reads NT. Cysteine 183 (proton donor/acceptor) is an active-site residue. 184-185 contributes to the substrate binding site; the sequence is TH.

The protein belongs to the aspartate/glutamate racemases family.

The catalysed reaction is L-glutamate = D-glutamate. It functions in the pathway cell wall biogenesis; peptidoglycan biosynthesis. Its function is as follows. Provides the (R)-glutamate required for cell wall biosynthesis. The protein is Glutamate racemase of Exiguobacterium sibiricum (strain DSM 17290 / CCUG 55495 / CIP 109462 / JCM 13490 / 255-15).